The primary structure comprises 113 residues: Large ribosomal subunit protein bL19 (113 aa).

The protein belongs to the bacterial ribosomal protein bL19 family.

In terms of biological role, this protein is located at the 30S-50S ribosomal subunit interface and may play a role in the structure and function of the aminoacyl-tRNA binding site. This is Large ribosomal subunit protein bL19 from Mycobacterium marinum (strain ATCC BAA-535 / M).